Reading from the N-terminus, the 430-residue chain is MSSIVAIKGFNDVLPTQTAAWRRLEQHLASLMDAYGYQQIRLPIVEQTGLFKRAIGDATDIVEKEMYTFFDKGNPPESLTLRPEGTAGCVRALVEHNLLRGATPRVWYMGPMFRYEKPQKGRYRQFHQFGVETFGVATPDIEAEVILMTARLWKRMGVAHMVQLELNTLGEKEERTEYRNALVAFLNEHKDALDEDSQRRLTTNPLRILDSKIESTQKILENAPKLYDFLKEDSLSHFQQLQDYLTAAGIKFVINQKLVRGLDYYNKTVFEWTTTALGSQGTVCGGGRYDGLVGQLKGKADQSVPAVGFGMGMERLLLLIEQVEQAEIVRDCEAFLVAEPAYQSKALVLAEQLRDQLEAANSNIRIKTGSQGSMKSQMKKADQAGAVYAIILGEREWEAQQLAIKELATAEQSQVALAELVPFLIEKFTK.

Belongs to the class-II aminoacyl-tRNA synthetase family. As to quaternary structure, homodimer.

It localises to the cytoplasm. The catalysed reaction is tRNA(His) + L-histidine + ATP = L-histidyl-tRNA(His) + AMP + diphosphate + H(+). This chain is Histidine--tRNA ligase, found in Acinetobacter baumannii (strain ATCC 17978 / DSM 105126 / CIP 53.77 / LMG 1025 / NCDC KC755 / 5377).